The primary structure comprises 166 residues: Regulatory protein RecX (166 aa).

Belongs to the RecX family.

The protein resides in the cytoplasm. Its function is as follows. Modulates RecA activity. This chain is Regulatory protein RecX, found in Salmonella paratyphi C (strain RKS4594).